The sequence spans 593 residues: Inactive metallocarboxypeptidase ECM14 (593 aa).

A signal peptide spans 1–22 (MHVTVQLSLLLSLASSLPLVSA). Positions 23 to 175 (IPQHDGQAYT…QAIYESYPKN (153 aa)) are excised as a propeptide. 2 disordered regions span residues 75–98 (VPQR…KAPA) and 172–202 (YPKN…SQPH). Over residues 78–88 (RGKDSETKTGK) the composition is skewed to basic and acidic residues. Polar residues predominate over residues 188–199 (RRFSPSASTPES). The 327-residue stretch at 211–537 (DYQPLSVLLP…HAVVAMGKFL (327 aa)) folds into the Peptidase M14 domain. Zn(2+) contacts are provided by histidine 276 and glutamate 279. Residues 276 to 279 (HARE), arginine 334, and 351 to 352 (DR) contribute to the substrate site. A disulfide bridge links cysteine 345 with cysteine 368. Asparagine 361 carries N-linked (GlcNAc...) asparagine glycosylation. Residue histidine 408 coordinates Zn(2+). Residue 409–410 (SY) coordinates substrate. The interval 548 to 593 (DEPHAGEQTQDNSYDEDGDNLFRAQGGDPQVRFTRRNIGAHDDDSE) is disordered.

Belongs to the peptidase M14 family. The cofactor is Zn(2+).

It is found in the vacuole. The protein localises to the secreted. Inactive carboxypeptidase that may play a role in cell wall organization and biogenesis. This chain is Inactive metallocarboxypeptidase ECM14 (ECM14), found in Arthroderma otae (strain ATCC MYA-4605 / CBS 113480) (Microsporum canis).